A 380-amino-acid chain; its full sequence is Lipid-A-disaccharide synthase (380 aa).

The protein belongs to the LpxB family.

It carries out the reaction a lipid X + a UDP-2-N,3-O-bis[(3R)-3-hydroxyacyl]-alpha-D-glucosamine = a lipid A disaccharide + UDP + H(+). It functions in the pathway bacterial outer membrane biogenesis; LPS lipid A biosynthesis. Condensation of UDP-2,3-diacylglucosamine and 2,3-diacylglucosamine-1-phosphate to form lipid A disaccharide, a precursor of lipid A, a phosphorylated glycolipid that anchors the lipopolysaccharide to the outer membrane of the cell. The protein is Lipid-A-disaccharide synthase of Pseudomonas syringae pv. syringae (strain B728a).